We begin with the raw amino-acid sequence, 540 residues long: Chaperonin GroEL 2/3 (540 aa).

Residues Thr-30 to Pro-33, Lys-51, Asp-87 to Thr-91, Gly-415, Asn-479 to Ala-481, and Asp-495 each bind ATP.

Belongs to the chaperonin (HSP60) family. As to quaternary structure, forms a cylinder of 14 subunits composed of two heptameric rings stacked back-to-back. Interacts with the co-chaperonin GroES.

It localises to the cytoplasm. The catalysed reaction is ATP + H2O + a folded polypeptide = ADP + phosphate + an unfolded polypeptide.. In terms of biological role, together with its co-chaperonin GroES, plays an essential role in assisting protein folding. The GroEL-GroES system forms a nano-cage that allows encapsulation of the non-native substrate proteins and provides a physical environment optimized to promote and accelerate protein folding. This chain is Chaperonin GroEL 2/3, found in Paraburkholderia xenovorans (strain LB400).